Reading from the N-terminus, the 229-residue chain is uncharacterized protein (229 aa).

This is an uncharacterized protein from Methanocaldococcus jannaschii (strain ATCC 43067 / DSM 2661 / JAL-1 / JCM 10045 / NBRC 100440) (Methanococcus jannaschii).